Consider the following 273-residue polypeptide: Ribosomal RNA small subunit methyltransferase A (273 aa).

S-adenosyl-L-methionine is bound by residues Asn23, Ile25, Gly50, Glu72, Asp97, and Asn116.

The protein belongs to the class I-like SAM-binding methyltransferase superfamily. rRNA adenine N(6)-methyltransferase family. RsmA subfamily.

The protein localises to the cytoplasm. It catalyses the reaction adenosine(1518)/adenosine(1519) in 16S rRNA + 4 S-adenosyl-L-methionine = N(6)-dimethyladenosine(1518)/N(6)-dimethyladenosine(1519) in 16S rRNA + 4 S-adenosyl-L-homocysteine + 4 H(+). Its function is as follows. Specifically dimethylates two adjacent adenosines (A1518 and A1519) in the loop of a conserved hairpin near the 3'-end of 16S rRNA in the 30S particle. May play a critical role in biogenesis of 30S subunits. The sequence is that of Ribosomal RNA small subunit methyltransferase A from Rickettsia akari (strain Hartford).